Reading from the N-terminus, the 499-residue chain is Probable dipeptidase B (499 aa).

The active site involves Cys26.

The protein belongs to the peptidase C69 family.

It catalyses the reaction an L-aminoacyl-L-amino acid + H2O = 2 an L-alpha-amino acid. In Streptococcus pyogenes serotype M3 (strain ATCC BAA-595 / MGAS315), this protein is Probable dipeptidase B (pepDB).